We begin with the raw amino-acid sequence, 210 residues long: Large ribosomal subunit protein uL3 (210 aa).

The disordered stretch occupies residues 125–154 (RHGFRGGPKTHGQSDRHRAPGSIGAGTTPG).

Belongs to the universal ribosomal protein uL3 family. In terms of assembly, part of the 50S ribosomal subunit. Forms a cluster with proteins L14 and L19.

One of the primary rRNA binding proteins, it binds directly near the 3'-end of the 23S rRNA, where it nucleates assembly of the 50S subunit. The protein is Large ribosomal subunit protein uL3 of Chloroflexus aggregans (strain MD-66 / DSM 9485).